We begin with the raw amino-acid sequence, 567 residues long: Wee1-like protein kinase 2 (567 aa).

Composition is skewed to basic and acidic residues over residues 1–12 (MDDKDIDKELRQ), 25–35 (EGQKKVEESRE), 42–51 (EKGEVQDSEA), and 64–77 (HELD…KESP). The disordered stretch occupies residues 1–117 (MDDKDIDKEL…DSPSTPKTML (117 aa)). Ser76 is modified (phosphoserine). The Nuclear localization signal motif lies at 173 to 175 (KRK). The Protein kinase domain occupies 212-486 (FLEVEKIGVG…AAALARNTVL (275 aa)). ATP contacts are provided by residues 218-226 (IGVGEFGTV) and Lys241. The short motif at 315-329 (KLKDILLQISLGLNY) is the Nuclear export signal element. Residue Asp339 is the Proton acceptor of the active site. The Mg(2+) site is built by Asn344 and Asp380. Positions 494-519 (EELQQQLNLEKFKTATLERELREAQQ) form a coiled coil. The tract at residues 514–567 (LREAQQAQSPQGYTHHGDTGVSGTHTGSRSTKRLVGGKSARSSSFTSGEREPLH) is disordered.

The protein belongs to the protein kinase superfamily. Ser/Thr protein kinase family. WEE1 subfamily. Phosphorylated on serine residues. Phosphorylation leads to increase its activity. In terms of tissue distribution, expressed in oocytes (at protein level). May also be expressed in testis.

The protein resides in the nucleus. The enzyme catalyses L-tyrosyl-[protein] + ATP = O-phospho-L-tyrosyl-[protein] + ADP + H(+). In terms of biological role, oocyte-specific protein tyrosine kinase that phosphorylates and inhibits CDK1/CDC2 and acts as a key regulator of meiosis during both prophase I and metaphase II. Required to maintain meiotic arrest in oocytes during the germinal vesicle (GV) stage, a long period of quiescence at dictyate prophase I, by phosphorylating CDK1 at 'Tyr-15', leading to inhibit CDK1 activity and prevent meiotic reentry. Also required for metaphase II exit during egg activation by phosphorylating CDK1 at 'Tyr-15', to ensure exit from meiosis in oocytes and promote pronuclear formation. This is Wee1-like protein kinase 2 (WEE2) from Homo sapiens (Human).